The sequence spans 517 residues: Crotonobetaine/carnitine--CoA ligase (517 aa).

The protein belongs to the ATP-dependent AMP-binding enzyme family.

The catalysed reaction is 4-(trimethylamino)butanoate + ATP + CoA = 4-(trimethylamino)butanoyl-CoA + AMP + diphosphate. It catalyses the reaction crotonobetaine + ATP + CoA = crotonobetainyl-CoA + AMP + diphosphate. It carries out the reaction (R)-carnitine + ATP + CoA = (R)-carnitinyl-CoA + AMP + diphosphate. Its pathway is amine and polyamine metabolism; carnitine metabolism. Its function is as follows. Catalyzes the transfer of CoA to carnitine, generating the initial carnitinyl-CoA needed for the CaiB reaction cycle. Also has activity toward crotonobetaine and gamma-butyrobetaine. In Shigella sonnei (strain Ss046), this protein is Crotonobetaine/carnitine--CoA ligase.